The sequence spans 124 residues: Small ribosomal subunit protein uS12 (124 aa).

D89 carries the post-translational modification 3-methylthioaspartic acid.

It belongs to the universal ribosomal protein uS12 family. Part of the 30S ribosomal subunit. Contacts proteins S8 and S17. May interact with IF1 in the 30S initiation complex.

Functionally, with S4 and S5 plays an important role in translational accuracy. Interacts with and stabilizes bases of the 16S rRNA that are involved in tRNA selection in the A site and with the mRNA backbone. Located at the interface of the 30S and 50S subunits, it traverses the body of the 30S subunit contacting proteins on the other side and probably holding the rRNA structure together. The combined cluster of proteins S8, S12 and S17 appears to hold together the shoulder and platform of the 30S subunit. This is Small ribosomal subunit protein uS12 from Shewanella amazonensis (strain ATCC BAA-1098 / SB2B).